A 298-amino-acid chain; its full sequence is Diphthine methyl ester synthase (298 aa).

Residues leucine 9, aspartate 85, glycine 88, 113–114 (SV), leucine 164, leucine 222, and histidine 247 each bind S-adenosyl-L-methionine.

Belongs to the diphthine synthase family.

The protein localises to the cytoplasm. The enzyme catalyses 2-[(3S)-amino-3-carboxypropyl]-L-histidyl-[translation elongation factor 2] + 4 S-adenosyl-L-methionine = diphthine methyl ester-[translation elongation factor 2] + 4 S-adenosyl-L-homocysteine + 3 H(+). It functions in the pathway protein modification; peptidyl-diphthamide biosynthesis. S-adenosyl-L-methionine-dependent methyltransferase that catalyzes four methylations of the modified target histidine residue in translation elongation factor 2 (EF-2), to form an intermediate called diphthine methyl ester. The four successive methylation reactions represent the second step of diphthamide biosynthesis. This is Diphthine methyl ester synthase (DPH5) from Eremothecium gossypii (strain ATCC 10895 / CBS 109.51 / FGSC 9923 / NRRL Y-1056) (Yeast).